The chain runs to 439 residues: Keratin, type I cytoskeletal 40 (439 aa).

Residues 1 to 89 are head; it reads MASDGSPSCC…CEEGSFNSNE (89 aa). The IF rod domain occupies 89-400; sequence EKETMQFLND…GLLEKEDSRL (312 aa). The interval 90-124 is coil 1A; sequence KETMQFLNDRLASYLERVRSLEENNAELECRIREQ. The segment at 125–135 is linker 1; that stretch reads CEPNAPLVCPD. Positions 136 to 236 are coil 1B; it reads YQRYFDTIEE…HEEEVNLLRE (101 aa). The linker 12 stretch occupies residues 237–252; the sequence is QLGDRLSVELDTAPTV. The segment at 253-396 is coil 2; the sequence is DLNKVLDEMR…NTYRGLLEKE (144 aa). Positions 397 to 439 are tail; the sequence is DSRLPCNPGSGAPMPNSTCEPCSNSMCEPCSAYVICTVENCCA.

It belongs to the intermediate filament family. Heterotetramer of two type I and two type II keratins.

Functionally, may play a role in late hair differentiation. This is Keratin, type I cytoskeletal 40 (Krt40) from Mus musculus (Mouse).